The following is a 333-amino-acid chain: NADH-quinone oxidoreductase subunit H (333 aa).

8 helical membrane-spanning segments follow: residues Ile-15 to Tyr-35, Tyr-88 to Phe-108, Ile-117 to Ala-137, Leu-165 to Val-185, Val-191 to Glu-211, Phe-241 to Phe-261, Ile-274 to Phe-294, and Val-313 to Phe-333.

It belongs to the complex I subunit 1 family. In terms of assembly, NDH-1 is composed of 14 different subunits. Subunits NuoA, H, J, K, L, M, N constitute the membrane sector of the complex.

It localises to the cell membrane. It carries out the reaction a quinone + NADH + 5 H(+)(in) = a quinol + NAD(+) + 4 H(+)(out). Functionally, NDH-1 shuttles electrons from NADH, via FMN and iron-sulfur (Fe-S) centers, to quinones in the respiratory chain. The immediate electron acceptor for the enzyme in this species is believed to be ubiquinone. Couples the redox reaction to proton translocation (for every two electrons transferred, four hydrogen ions are translocated across the cytoplasmic membrane), and thus conserves the redox energy in a proton gradient. This subunit may bind ubiquinone. The protein is NADH-quinone oxidoreductase subunit H of Geobacillus kaustophilus (strain HTA426).